Reading from the N-terminus, the 88-residue chain is Beta-insect excitatory toxin LqhIT1a (88 aa).

The first 18 residues, 1–18 (MKFFLLFLVVLPIMGVLG), serve as a signal peptide directing secretion. An LCN-type CS-alpha/beta domain is found at 20–83 (KNGYAVDSKG…ISGTTKKYCD (64 aa)). 4 disulfide bridges follow: Cys34/Cys55, Cys40/Cys60, Cys44/Cys62, and Cys56/Cys82.

This sequence belongs to the long (4 C-C) scorpion toxin superfamily. Sodium channel inhibitor family. Beta subfamily. In terms of tissue distribution, expressed by the venom gland.

It localises to the secreted. Functionally, excitatory insect toxins induce a spastic paralysis. They bind voltage-independently at site-4 of sodium channels (Nav) and shift the voltage of activation toward more negative potentials thereby affecting sodium channel activation and promoting spontaneous and repetitive firing. The protein is Beta-insect excitatory toxin LqhIT1a of Leiurus hebraeus (Hebrew deathstalker scorpion).